The following is a 380-amino-acid chain: Cytochrome b (380 aa).

Helical transmembrane passes span 33–53 (FGSL…FLAM), 77–98 (WLIR…YMHI), 113–133 (WNIG…GYVL), and 178–198 (FFAF…IHLL). Positions 83 and 97 each coordinate heme b. His182 and His196 together coordinate heme b. His201 is an a ubiquinone binding site. 4 consecutive transmembrane segments (helical) span residues 226 to 246 (YKDL…ALFS), 288 to 308 (LGGV…PLLH), 320 to 340 (ITQF…WIGG), and 347 to 367 (FIII…VLFP).

This sequence belongs to the cytochrome b family. As to quaternary structure, the cytochrome bc1 complex contains 3 respiratory subunits (MT-CYB, CYC1 and UQCRFS1), 2 core proteins (UQCRC1 and UQCRC2) and probably 6 low-molecular weight proteins. Requires heme b as cofactor.

Its subcellular location is the mitochondrion inner membrane. Its function is as follows. Component of the ubiquinol-cytochrome c reductase complex (complex III or cytochrome b-c1 complex) that is part of the mitochondrial respiratory chain. The b-c1 complex mediates electron transfer from ubiquinol to cytochrome c. Contributes to the generation of a proton gradient across the mitochondrial membrane that is then used for ATP synthesis. This Carassius auratus (Goldfish) protein is Cytochrome b (mt-cyb).